Consider the following 667-residue polypeptide: DNA ligase (667 aa).

NAD(+) is bound by residues 32–36 (DSEYD), 81–82 (SL), and glutamate 110. The active-site N6-AMP-lysine intermediate is the lysine 112. 4 residues coordinate NAD(+): arginine 133, glutamate 167, lysine 283, and lysine 307. Zn(2+) is bound by residues cysteine 401, cysteine 404, cysteine 419, and cysteine 424. Positions 586-667 (EGHPEFSGKT…FVDKQNELNS (82 aa)) constitute a BRCT domain.

Belongs to the NAD-dependent DNA ligase family. LigA subfamily. Mg(2+) is required as a cofactor. Requires Mn(2+) as cofactor.

It carries out the reaction NAD(+) + (deoxyribonucleotide)n-3'-hydroxyl + 5'-phospho-(deoxyribonucleotide)m = (deoxyribonucleotide)n+m + AMP + beta-nicotinamide D-nucleotide.. Its function is as follows. DNA ligase that catalyzes the formation of phosphodiester linkages between 5'-phosphoryl and 3'-hydroxyl groups in double-stranded DNA using NAD as a coenzyme and as the energy source for the reaction. It is essential for DNA replication and repair of damaged DNA. This chain is DNA ligase, found in Staphylococcus aureus (strain MRSA252).